Here is a 181-residue protein sequence, read N- to C-terminus: Putative D-tyrosyl-tRNA(Tyr) deacylase 2 (181 aa).

The protein belongs to the DTD family. Highly divergent. As to quaternary structure, homodimer.

It localises to the cytoplasm. May hydrolyze D-tyrosyl-tRNA(Tyr) into D-tyrosine and free tRNA(Tyr). Could be a defense mechanism against a harmful effect of D-tyrosine. The protein is Putative D-tyrosyl-tRNA(Tyr) deacylase 2 of Leishmania major.